A 253-amino-acid polypeptide reads, in one-letter code: Ubiquinone/menaquinone biosynthesis C-methyltransferase UbiE (253 aa).

Residues Thr76, Asp97, 125–126 (NA), and Ser142 each bind S-adenosyl-L-methionine.

It belongs to the class I-like SAM-binding methyltransferase superfamily. MenG/UbiE family.

The catalysed reaction is a 2-demethylmenaquinol + S-adenosyl-L-methionine = a menaquinol + S-adenosyl-L-homocysteine + H(+). The enzyme catalyses a 2-methoxy-6-(all-trans-polyprenyl)benzene-1,4-diol + S-adenosyl-L-methionine = a 5-methoxy-2-methyl-3-(all-trans-polyprenyl)benzene-1,4-diol + S-adenosyl-L-homocysteine + H(+). It functions in the pathway quinol/quinone metabolism; menaquinone biosynthesis; menaquinol from 1,4-dihydroxy-2-naphthoate: step 2/2. The protein operates within cofactor biosynthesis; ubiquinone biosynthesis. Methyltransferase required for the conversion of demethylmenaquinol (DMKH2) to menaquinol (MKH2) and the conversion of 2-polyprenyl-6-methoxy-1,4-benzoquinol (DDMQH2) to 2-polyprenyl-3-methyl-6-methoxy-1,4-benzoquinol (DMQH2). The polypeptide is Ubiquinone/menaquinone biosynthesis C-methyltransferase UbiE (Xanthomonas oryzae pv. oryzae (strain MAFF 311018)).